Reading from the N-terminus, the 174-residue chain is Large ribosomal subunit protein uL10 (174 aa).

The protein belongs to the universal ribosomal protein uL10 family. As to quaternary structure, part of the ribosomal stalk of the 50S ribosomal subunit. The N-terminus interacts with L11 and the large rRNA to form the base of the stalk. The C-terminus forms an elongated spine to which L12 dimers bind in a sequential fashion forming a multimeric L10(L12)X complex.

Its function is as follows. Forms part of the ribosomal stalk, playing a central role in the interaction of the ribosome with GTP-bound translation factors. In Vesicomyosocius okutanii subsp. Calyptogena okutanii (strain HA), this protein is Large ribosomal subunit protein uL10.